The following is a 177-amino-acid chain: UPF0178 protein TP_0845 (177 aa).

The tract at residues 155-177 is disordered; sequence EAKTGEEQCDWPSAQGKSQTGRR.

The protein belongs to the UPF0178 family.

This is UPF0178 protein TP_0845 from Treponema pallidum (strain Nichols).